The following is an 89-amino-acid chain: Small ribosomal subunit protein bS18 (89 aa).

Residues 1–15 (MTTANTNETAAAAAA) show a composition bias toward low complexity. The tract at residues 1-22 (MTTANTNETAAAAAAKNRRNKK) is disordered.

This sequence belongs to the bacterial ribosomal protein bS18 family. In terms of assembly, part of the 30S ribosomal subunit. Forms a tight heterodimer with protein bS6.

Functionally, binds as a heterodimer with protein bS6 to the central domain of the 16S rRNA, where it helps stabilize the platform of the 30S subunit. The sequence is that of Small ribosomal subunit protein bS18 from Caldanaerobacter subterraneus subsp. tengcongensis (strain DSM 15242 / JCM 11007 / NBRC 100824 / MB4) (Thermoanaerobacter tengcongensis).